Reading from the N-terminus, the 689-residue chain is Glycine--tRNA ligase beta subunit (689 aa).

Belongs to the class-II aminoacyl-tRNA synthetase family. In terms of assembly, tetramer of two alpha and two beta subunits.

The protein localises to the cytoplasm. The catalysed reaction is tRNA(Gly) + glycine + ATP = glycyl-tRNA(Gly) + AMP + diphosphate. The polypeptide is Glycine--tRNA ligase beta subunit (Citrobacter koseri (strain ATCC BAA-895 / CDC 4225-83 / SGSC4696)).